A 261-amino-acid chain; its full sequence is tRNA 5-carboxymethoxyuridine methyltransferase (261 aa).

Residues R26, G52–G53, D73, A102–Q103, and H119 each bind S-adenosyl-L-methionine.

Belongs to the class I-like SAM-binding methyltransferase superfamily. CmoM family.

The catalysed reaction is 5-carboxymethoxyuridine(34) in tRNA + S-adenosyl-L-methionine = 5-methoxycarbonylmethoxyuridine(34) in tRNA + S-adenosyl-L-homocysteine. Catalyzes the methylation of 5-carboxymethoxyuridine (cmo5U) to form 5-methoxycarbonylmethoxyuridine (mcmo5U) at position 34 in tRNAs. Four tRNAs (tRNA(Ala1), tRNA(Ser1), tRNA(Pro3) and tRNA(Thr4)) are fully modified with mcmo5U in stationary-phase E.coli. Also present at low frequency in tRNA(Leu3) and tRNA(Val1). This is tRNA 5-carboxymethoxyuridine methyltransferase from Escherichia coli (strain K12).